The chain runs to 342 residues: GTPase Obg (342 aa).

In terms of domain architecture, Obg spans 1-159 (MQFIDRAEIE…RHLRLELKLL (159 aa)). Residues 160 to 328 (AEVGIIGLPN…LLAKVWQQLE (169 aa)) enclose the OBG-type G domain. GTP contacts are provided by residues 166–173 (GLPNAGKS), 191–195 (FTTLI), 213–216 (DIPG), 280–283 (NKID), and 309–311 (SAV). Mg(2+) contacts are provided by Ser-173 and Thr-193.

Belongs to the TRAFAC class OBG-HflX-like GTPase superfamily. OBG GTPase family. Monomer. Mg(2+) is required as a cofactor.

The protein resides in the cytoplasm. In terms of biological role, an essential GTPase which binds GTP, GDP and possibly (p)ppGpp with moderate affinity, with high nucleotide exchange rates and a fairly low GTP hydrolysis rate. Plays a role in control of the cell cycle, stress response, ribosome biogenesis and in those bacteria that undergo differentiation, in morphogenesis control. This chain is GTPase Obg, found in Microcystis aeruginosa (strain NIES-843 / IAM M-2473).